Consider the following 130-residue polypeptide: uncharacterized protein (130 aa).

The interval 1–34 (MTAVGGSPPTRRCPATEDRAPATVATPSSTDPTA) is disordered.

It to M.tuberculosis Rv1583c.

This is an uncharacterized protein from Mycobacterium tuberculosis (strain CDC 1551 / Oshkosh).